The sequence spans 465 residues: VGFKAGVKEYKLTYHTPEYETKDTDILAAFRVTPQPGVPPEEAGAAVAAESSTGTWTTVWTDGLTSLDRYKGRCYHIEPVPGEESQFIAYVAYPLDLFEEGSVTNMFTSIVGXVFGFKALRALRLEDLRIPPAYVKTFQGPPHGIQVERDKLNKYGRPLLGCTIKPKLGLSAKNYGRAVYECLRGGLDFTKDDENVNSQPFMRWRDRFLFCAEAIYKAQAETGEIKGHYLNATAGTCEEMIKRAVFARELGVPIVMHDYLTGGFTANTSLAHYCRDNGLLLHIHRAMHAVIDRQKNHGMHFRVLAKALRMSGGDHVHSGTVVGKLEGEREITLGFVDLLRDDFIEKDRSRGIFFTQDWVSLPGVLPVASGGIHVWHXPALTEIFGDDSVLQFGGGTLGHXWGNAPGAVANRVALEACVQARNEGXDLAREGNEIIREASKWSPELAAACEIWKEIKFEFEAMDTL.

Position 4 is an N6,N6,N6-trimethyllysine (lysine 4). Substrate-binding residues include residue 113 and threonine 163. Residue lysine 165 is the Proton acceptor of the active site. Lysine 167 provides a ligand contact to substrate. The Mg(2+) site is built by lysine 191, aspartate 193, and glutamate 194. Lysine 191 carries the post-translational modification N6-carboxylysine. The active-site Proton acceptor is histidine 284. Substrate-binding residues include arginine 285, histidine 317, and serine 369.

The protein belongs to the RuBisCO large chain family. Type I subfamily. Heterohexadecamer of 8 large chains and 8 small chains; disulfide-linked. The disulfide link is formed within the large subunit homodimers. Requires Mg(2+) as cofactor. Post-translationally, the disulfide bond which can form in the large chain dimeric partners within the hexadecamer appears to be associated with oxidative stress and protein turnover.

Its subcellular location is the plastid. The protein resides in the chloroplast. It catalyses the reaction 2 (2R)-3-phosphoglycerate + 2 H(+) = D-ribulose 1,5-bisphosphate + CO2 + H2O. The enzyme catalyses D-ribulose 1,5-bisphosphate + O2 = 2-phosphoglycolate + (2R)-3-phosphoglycerate + 2 H(+). In terms of biological role, ruBisCO catalyzes two reactions: the carboxylation of D-ribulose 1,5-bisphosphate, the primary event in carbon dioxide fixation, as well as the oxidative fragmentation of the pentose substrate in the photorespiration process. Both reactions occur simultaneously and in competition at the same active site. This chain is Ribulose bisphosphate carboxylase large chain, found in Cornus obliqua (Silky dogwood).